The sequence spans 696 residues: D-(-)-3-hydroxybutyrate oligomer hydrolase (696 aa).

Residues 1–26 form the signal peptide; it reads MDTHGWGSRILVGAALAALTMLGACN. Ser309 acts as the Charge relay system in catalysis.

The protein belongs to the D-(-)-3-hydroxybutyrate oligomer hydrolase family.

The protein localises to the secreted. The catalysed reaction is (3R)-hydroxybutanoate dimer + H2O = 2 (R)-3-hydroxybutanoate + H(+). It participates in lipid metabolism; butanoate metabolism. In terms of biological role, participates in the degradation of poly-3-hydroxybutyrate (PHB). It works downstream of poly(3-hydroxybutyrate) depolymerase, hydrolyzing D(-)-3-hydroxybutyrate oligomers of various length (3HB-oligomers) into 3HB-monomers. This chain is D-(-)-3-hydroxybutyrate oligomer hydrolase, found in Burkholderia vietnamiensis (strain G4 / LMG 22486) (Burkholderia cepacia (strain R1808)).